The sequence spans 343 residues: S-adenosylmethionine:tRNA ribosyltransferase-isomerase (343 aa).

The protein belongs to the QueA family. As to quaternary structure, monomer.

The protein resides in the cytoplasm. It catalyses the reaction 7-aminomethyl-7-carbaguanosine(34) in tRNA + S-adenosyl-L-methionine = epoxyqueuosine(34) in tRNA + adenine + L-methionine + 2 H(+). Its pathway is tRNA modification; tRNA-queuosine biosynthesis. Functionally, transfers and isomerizes the ribose moiety from AdoMet to the 7-aminomethyl group of 7-deazaguanine (preQ1-tRNA) to give epoxyqueuosine (oQ-tRNA). The polypeptide is S-adenosylmethionine:tRNA ribosyltransferase-isomerase (Latilactobacillus sakei subsp. sakei (strain 23K) (Lactobacillus sakei subsp. sakei)).